The chain runs to 428 residues: L-rhamnonate dehydratase (428 aa).

Histidine 56 and arginine 82 together coordinate substrate. Residues aspartate 249, glutamate 275, and glutamate 303 each coordinate Mg(2+). The Proton acceptor role is filled by histidine 352. Glutamate 372 provides a ligand contact to substrate.

It belongs to the mandelate racemase/muconate lactonizing enzyme family. RhamD subfamily. As to quaternary structure, homooctamer; tetramer of dimers. Mg(2+) is required as a cofactor.

It catalyses the reaction L-rhamnonate = 2-dehydro-3-deoxy-L-rhamnonate + H2O. Its function is as follows. Catalyzes the dehydration of L-rhamnonate to 2-keto-3-deoxy-L-rhamnonate (KDR). The sequence is that of L-rhamnonate dehydratase from Shigella sonnei (strain Ss046).